A 222-amino-acid chain; its full sequence is Sperm acrosome-associated protein 9 (222 aa).

Residues 164 to 222 are disordered; sequence QHVSEPQAHQESTRGAARPAQAIGTQPRATKHKCRQLTKASLKPRGCSKPPWRPPGGKL.

Microtubule inner protein component of sperm flagellar doublet microtubules. Interacts with CABP1 and CALR. Interacts with INCA1. Interacts with microtubules.

The protein resides in the cytoplasm. It is found in the cytoplasmic vesicle. The protein localises to the secretory vesicle. It localises to the acrosome. Its subcellular location is the cytoskeleton. The protein resides in the cilium basal body. It is found in the flagellum axoneme. The protein localises to the cilium axoneme. It localises to the nucleus. In terms of biological role, microtubule inner protein (MIP) part of the dynein-decorated doublet microtubules (DMTs) of multiciliated respiratory cells and the distal singlet microtubules of monoflagellated spermatozoa. Forms an extensive interaction network cross-linking the lumen of axonemal doublet microtubules. The protein is Sperm acrosome-associated protein 9 of Homo sapiens (Human).